Reading from the N-terminus, the 588-residue chain is Actin-histidine N-methyltransferase (588 aa).

The tract at residues 1–25 (MGKKSRVKTQKSGTGATASVSPKET) is disordered. A compositionally biased stretch (polar residues) spans 10–25 (QKSGTGATASVSPKET). Residues R75, 104–106 (EGF), R254, 275–279 (DMCNH), and 325–327 (SGF) contribute to the S-adenosyl-L-methionine site. In terms of domain architecture, SET spans 94 to 314 (EGFEMVNFKE…AGEQIYIFYG (221 aa)). The tract at residues 546–588 (VNGENSIPNGTRSGKENFNQEGSERATEGTKESSSDSTAGARE) is disordered. Residues 548–566 (GENSIPNGTRSGKENFNQE) show a composition bias toward polar residues. A compositionally biased stretch (basic and acidic residues) spans 567–579 (GSERATEGTKESS).

The protein belongs to the class V-like SAM-binding methyltransferase superfamily. SETD3 actin-histidine methyltransferase family. In terms of assembly, interacts with MYOD1. Post-translationally, phosphorylated by GSK3B, which is required for recognition by the SCF(FBXW7) complex and subsequent degradation. In terms of processing, ubiquitinated by the SCF(FBXW7) complex following phosphorylation by GSK3B, leading to its degradation by the proteasome.

Its subcellular location is the cytoplasm. It is found in the nucleus. It carries out the reaction L-histidyl-[protein] + S-adenosyl-L-methionine = N(tele)-methyl-L-histidyl-[protein] + S-adenosyl-L-homocysteine + H(+). Functionally, protein-histidine N-methyltransferase that specifically mediates 3-methylhistidine (tele-methylhistidine) methylation of actin at 'His-73'. Histidine methylation of actin is required for smooth muscle contraction of the laboring uterus during delivery. Does not have protein-lysine N-methyltransferase activity and probably only catalyzes histidine methylation of actin. The chain is Actin-histidine N-methyltransferase from Canis lupus familiaris (Dog).